The following is a 406-amino-acid chain: 3-oxoacyl-[acyl-carrier-protein] synthase 1 (406 aa).

A Ketosynthase family 3 (KS3) domain is found at 1–403; that stretch reads MRRTVITGFG…GTNATLIFKR (403 aa). Catalysis depends on for beta-ketoacyl synthase activity residues C162, H297, and H332.

The protein belongs to the thiolase-like superfamily. Beta-ketoacyl-ACP synthases family. Homodimer.

The protein localises to the cytoplasm. It catalyses the reaction a fatty acyl-[ACP] + malonyl-[ACP] + H(+) = a 3-oxoacyl-[ACP] + holo-[ACP] + CO2. The catalysed reaction is (3Z)-decenoyl-[ACP] + malonyl-[ACP] + H(+) = 3-oxo-(5Z)-dodecenoyl-[ACP] + holo-[ACP] + CO2. It participates in lipid metabolism; fatty acid biosynthesis. Its function is as follows. Involved in the type II fatty acid elongation cycle. Catalyzes the elongation of a wide range of acyl-ACP by the addition of two carbons from malonyl-ACP to an acyl acceptor. Can also use unsaturated fatty acids. Catalyzes a key reaction in unsaturated fatty acid (UFA) synthesis, the elongation of the cis-3-decenoyl-ACP produced by FabA. The chain is 3-oxoacyl-[acyl-carrier-protein] synthase 1 (fabB) from Haemophilus influenzae (strain ATCC 51907 / DSM 11121 / KW20 / Rd).